We begin with the raw amino-acid sequence, 196 residues long: Beta-crystallin A4 (196 aa).

At T2 the chain carries N-acetylthreonine. Positions 2–11 are N-terminal arm; it reads TLQCTKSAGH. Beta/gamma crystallin 'Greek key' domains are found at residues 12 to 51 and 52 to 98; these read WRVV…KVLS and GAWV…RPVA. The segment at 99–104 is connecting peptide; the sequence is CANHRD. 2 consecutive Beta/gamma crystallin 'Greek key' domains span residues 105-146 and 147-195; these read SRLT…HVQS and GAWV…RRIQ.

As to quaternary structure, homo/heterodimer, or complexes of higher-order. The structure of beta-crystallin oligomers seems to be stabilized through interactions between the N-terminal arms.

Its function is as follows. Crystallins are the dominant structural components of the vertebrate eye lens. The chain is Beta-crystallin A4 (Cryba4) from Rattus norvegicus (Rat).